The primary structure comprises 138 residues: Integration host factor subunit beta (138 aa).

The span at 81-98 (KAGKELRERVDRSLERQG) shows a compositional bias: basic and acidic residues. The interval 81–138 (KAGKELRERVDRSLERQGDSSSEGEPVSLTAVKAARQAGGHHAAGFPAEATPTLVMSR) is disordered.

It belongs to the bacterial histone-like protein family. In terms of assembly, heterodimer of an alpha and a beta chain.

Functionally, this protein is one of the two subunits of integration host factor, a specific DNA-binding protein that functions in genetic recombination as well as in transcriptional and translational control. The protein is Integration host factor subunit beta of Ralstonia nicotianae (strain ATCC BAA-1114 / GMI1000) (Ralstonia solanacearum).